Reading from the N-terminus, the 235-residue chain is Segregation and condensation protein A (235 aa).

It belongs to the ScpA family. Component of a cohesin-like complex composed of ScpA, ScpB and the Smc homodimer, in which ScpA and ScpB bind to the head domain of Smc. The presence of the three proteins is required for the association of the complex with DNA.

The protein resides in the cytoplasm. Functionally, participates in chromosomal partition during cell division. May act via the formation of a condensin-like complex containing Smc and ScpB that pull DNA away from mid-cell into both cell halves. The chain is Segregation and condensation protein A from Streptococcus mutans serotype c (strain ATCC 700610 / UA159).